The following is a 674-amino-acid chain: Xaa-Pro aminopeptidase 2 (674 aa).

The N-terminal stretch at 1–22 is a signal peptide; it reads MAQAYWQCYPWLVLLCACAWSY. Residue Asn65 is glycosylated (N-linked (GlcNAc...) asparagine). Arg116 is a substrate binding site. 2 N-linked (GlcNAc...) asparagine glycosylation sites follow: Asn278 and Asn293. Residue His430 coordinates substrate. Zn(2+) is bound by residues Asp450, Asp461, and His524. The substrate site is built by His524, His533, and Glu555. 2 residues coordinate Zn(2+): Glu555 and Glu569. Ala650 carries the GPI-anchor amidated alanine lipid modification. The propeptide at 651–674 is removed in mature form; that stretch reads SAPHTTSLASMWVASALAILSWSC.

The protein belongs to the peptidase M24B family. In terms of assembly, homotrimer. Requires Zn(2+) as cofactor. N-glycosylated. In terms of tissue distribution, expressed strongly in lung, liver and heart, and at lower levels in kidney, testis, brain, spleen and skeletal muscle.

The protein localises to the cell membrane. It carries out the reaction Release of any N-terminal amino acid, including proline, that is linked to proline, even from a dipeptide or tripeptide.. With respect to regulation, inhibited by the chelating agents 1,10-phenanthroline and EDTA. Inhibited by the thiol-containing compounds 2-mercaptoethanol and dithiothreitol. Also inhibited by apstatin, captopril and p-(ch1oromercuri)benzenesulfonic acid. Weakly inhibited by D,L-2-mercaptomethyl-3-guanidinoethylthiopropanoic acid and N-[l-(R,S)-carboxy-(2-phenylethyl)]-Ala-Ala-Phe-p-aminobenzoate. Inhibited by ramiprilat and enalaprilat, in a Mn(2+)-dependent manner. Metal ions have a complex substrate- and concentration-dependent effect on activity. Activity towards Arg-Pro-Pro and Gly-Pro-Hyp is stimulated by Mn(2+) ion concentrations of 10-100 uM and then inhibited at Mn(2+) concentrations of 1-2 mM. Mn(2+) concentrations in excess of 2 mM stimulate activity towards Gly-Pro-Hyp but inhibit activity towards Arg-Pro-Pro. Zn(2+) and Co(2+) ions also inhibit activity towards Arg-Pro-Pro at high concentrations. Activity towards bradykinin is inhibited by Mn(2+) concentrations in excess of 1 mM. In terms of biological role, membrane-bound metalloprotease which catalyzes the removal of a penultimate prolyl residue from the N-termini of peptides, such as Arg-Pro-Pro. May play a role in the metabolism of the vasodilator bradykinin. The polypeptide is Xaa-Pro aminopeptidase 2 (Rattus norvegicus (Rat)).